A 155-amino-acid polypeptide reads, in one-letter code: Cytochrome c oxidase subunit 4, mitochondrial (155 aa).

The transit peptide at 1–25 (MLSLRQSIRFFKPATRTLCSSRYLL) directs the protein to the mitochondrion. A Phosphothreonine modification is found at T55. Zn(2+)-binding residues include C111, H119, C134, and C137.

Belongs to the cytochrome c oxidase subunit 5B family. Component of the cytochrome c oxidase (complex IV, CIV), a multisubunit enzyme composed of 12 subunits. The complex is composed of a catalytic core of 3 subunits COX1, COX2 and COX3, encoded in the mitochondrial DNA, and 9 supernumerary subunits COX4, COX5A (or COX5B), COX6, COX7, COX8, COX9, COX12, COX13 and COX26, which are encoded in the nuclear genome. The complex exists as a monomer or a dimer and forms supercomplexes (SCs) in the inner mitochondrial membrane with a dimer of ubiquinol-cytochrome c oxidoreductase (cytochrome b-c1 complex, complex III, CIII), resulting in 2 different assemblies (supercomplexes III(2)IV and III(2)IV(2)).

The protein localises to the mitochondrion inner membrane. Its pathway is energy metabolism; oxidative phosphorylation. Functionally, component of the cytochrome c oxidase, the last enzyme in the mitochondrial electron transport chain which drives oxidative phosphorylation. The respiratory chain contains 3 multisubunit complexes succinate dehydrogenase (complex II, CII), ubiquinol-cytochrome c oxidoreductase (cytochrome b-c1 complex, complex III, CIII) and cytochrome c oxidase (complex IV, CIV), that cooperate to transfer electrons derived from NADH and succinate to molecular oxygen, creating an electrochemical gradient over the inner membrane that drives transmembrane transport and the ATP synthase. Cytochrome c oxidase is the component of the respiratory chain that catalyzes the reduction of oxygen to water. Electrons originating from reduced cytochrome c in the intermembrane space (IMS) are transferred via the dinuclear copper A center (CU(A)) of COX2 and heme A of COX1 to the active site in COX1, a binuclear center (BNC) formed by heme A3 and copper B (CU(B)). The BNC reduces molecular oxygen to 2 water molecules using 4 electrons from cytochrome c in the IMS and 4 protons from the mitochondrial matrix. The sequence is that of Cytochrome c oxidase subunit 4, mitochondrial (COX4) from Saccharomyces cerevisiae (strain ATCC 204508 / S288c) (Baker's yeast).